The following is a 491-amino-acid chain: Aspartyl/glutamyl-tRNA(Asn/Gln) amidotransferase subunit B (491 aa).

Belongs to the GatB/GatE family. GatB subfamily. As to quaternary structure, heterotrimer of A, B and C subunits.

It carries out the reaction L-glutamyl-tRNA(Gln) + L-glutamine + ATP + H2O = L-glutaminyl-tRNA(Gln) + L-glutamate + ADP + phosphate + H(+). The enzyme catalyses L-aspartyl-tRNA(Asn) + L-glutamine + ATP + H2O = L-asparaginyl-tRNA(Asn) + L-glutamate + ADP + phosphate + 2 H(+). In terms of biological role, allows the formation of correctly charged Asn-tRNA(Asn) or Gln-tRNA(Gln) through the transamidation of misacylated Asp-tRNA(Asn) or Glu-tRNA(Gln) in organisms which lack either or both of asparaginyl-tRNA or glutaminyl-tRNA synthetases. The reaction takes place in the presence of glutamine and ATP through an activated phospho-Asp-tRNA(Asn) or phospho-Glu-tRNA(Gln). This Paraburkholderia xenovorans (strain LB400) protein is Aspartyl/glutamyl-tRNA(Asn/Gln) amidotransferase subunit B.